Consider the following 97-residue polypeptide: uncharacterized protein (97 aa).

The interval 58-97 (SLLLPRTVQTGGTEREKPGPGQRKRGAHCSACKRSSTRPS) is disordered.

This is an uncharacterized protein from Homo sapiens (Human).